A 386-amino-acid chain; its full sequence is S-adenosylmethionine synthase (386 aa).

Histidine 16 contacts ATP. Aspartate 18 lines the Mg(2+) pocket. Glutamate 44 is a K(+) binding site. Positions 57 and 100 each coordinate L-methionine. The segment at 100–110 is flexible loop; that stretch reads QSPDINVGVDQ. ATP-binding positions include 164-166, 231-232, aspartate 240, 246-247, alanine 263, and lysine 267; these read DGK, RF, and RK. Aspartate 240 lines the L-methionine pocket. L-methionine is bound at residue lysine 271.

The protein belongs to the AdoMet synthase family. Homotetramer; dimer of dimers. Mg(2+) is required as a cofactor. The cofactor is K(+).

The protein localises to the cytoplasm. It carries out the reaction L-methionine + ATP + H2O = S-adenosyl-L-methionine + phosphate + diphosphate. Its pathway is amino-acid biosynthesis; S-adenosyl-L-methionine biosynthesis; S-adenosyl-L-methionine from L-methionine: step 1/1. Catalyzes the formation of S-adenosylmethionine (AdoMet) from methionine and ATP. The overall synthetic reaction is composed of two sequential steps, AdoMet formation and the subsequent tripolyphosphate hydrolysis which occurs prior to release of AdoMet from the enzyme. In Sulfurovum sp. (strain NBC37-1), this protein is S-adenosylmethionine synthase.